Consider the following 357-residue polypeptide: MGRFDDAGAQDAEPDDRDVSPALTVGEGDIDASLRPRSLGEFIGQPRVREQLQLVLEGAKNRGGTPDHILLSGPPGLGKTSLAMIIAAELSSSLRVTSGPALERAGDLAAMLSNLVEGDVLFIDEIHRIARPAEEMLYLAMEDFRVDVVVGKGPGATSIPLEVAPFTLVGATTRSGALTGPLRDRFGFTAHMDFYEPAELERVLARSAGILGIHLGTEAGAEIARRSRGTPRIANRLLRRVRDYAEVRADGVITRDIAKAALEVYDVDELGLDRLDRAVLSALIRSFGGGPVGVSTLAVAVGEEPTTVEEVCEPFLVRAGMIARTPRGRVATASAWTHLGLTPPSGITGLGQTGLFD.

Residues 1-27 form a disordered region; the sequence is MGRFDDAGAQDAEPDDRDVSPALTVGE. The interval 1 to 195 is large ATPase domain (RuvB-L); that stretch reads MGRFDDAGAQ…FGFTAHMDFY (195 aa). ATP is bound by residues leucine 34, arginine 35, glycine 76, lysine 79, threonine 80, serine 81, 142-144, arginine 185, tyrosine 195, and arginine 232; that span reads EDF. Threonine 80 is a Mg(2+) binding site. Positions 196–266 are small ATPAse domain (RuvB-S); it reads EPAELERVLA…IAKAALEVYD (71 aa). A head domain (RuvB-H) region spans residues 269–357; that stretch reads ELGLDRLDRA…TGLGQTGLFD (89 aa). DNA-binding residues include arginine 324 and arginine 329.

Belongs to the RuvB family. Homohexamer. Forms an RuvA(8)-RuvB(12)-Holliday junction (HJ) complex. HJ DNA is sandwiched between 2 RuvA tetramers; dsDNA enters through RuvA and exits via RuvB. An RuvB hexamer assembles on each DNA strand where it exits the tetramer. Each RuvB hexamer is contacted by two RuvA subunits (via domain III) on 2 adjacent RuvB subunits; this complex drives branch migration. In the full resolvosome a probable DNA-RuvA(4)-RuvB(12)-RuvC(2) complex forms which resolves the HJ.

The protein resides in the cytoplasm. It catalyses the reaction ATP + H2O = ADP + phosphate + H(+). In terms of biological role, the RuvA-RuvB-RuvC complex processes Holliday junction (HJ) DNA during genetic recombination and DNA repair, while the RuvA-RuvB complex plays an important role in the rescue of blocked DNA replication forks via replication fork reversal (RFR). RuvA specifically binds to HJ cruciform DNA, conferring on it an open structure. The RuvB hexamer acts as an ATP-dependent pump, pulling dsDNA into and through the RuvAB complex. RuvB forms 2 homohexamers on either side of HJ DNA bound by 1 or 2 RuvA tetramers; 4 subunits per hexamer contact DNA at a time. Coordinated motions by a converter formed by DNA-disengaged RuvB subunits stimulates ATP hydrolysis and nucleotide exchange. Immobilization of the converter enables RuvB to convert the ATP-contained energy into a lever motion, pulling 2 nucleotides of DNA out of the RuvA tetramer per ATP hydrolyzed, thus driving DNA branch migration. The RuvB motors rotate together with the DNA substrate, which together with the progressing nucleotide cycle form the mechanistic basis for DNA recombination by continuous HJ branch migration. Branch migration allows RuvC to scan DNA until it finds its consensus sequence, where it cleaves and resolves cruciform DNA. The polypeptide is Holliday junction branch migration complex subunit RuvB (Mycobacterium sp. (strain JLS)).